Consider the following 406-residue polypeptide: Enoyl-[acyl-carrier-protein] reductase [NADH] (406 aa).

NAD(+) is bound by residues G48–F53, F74–E75, D111–A112, and I140–A141. Position 226 (Y226) interacts with substrate. Y236 functions as the Proton donor in the catalytic mechanism. NAD(+) is bound by residues K245 and L275–T277.

This sequence belongs to the TER reductase family. As to quaternary structure, monomer.

The catalysed reaction is a 2,3-saturated acyl-[ACP] + NAD(+) = a (2E)-enoyl-[ACP] + NADH + H(+). It participates in lipid metabolism; fatty acid biosynthesis. Its function is as follows. Involved in the final reduction of the elongation cycle of fatty acid synthesis (FAS II). Catalyzes the reduction of a carbon-carbon double bond in an enoyl moiety that is covalently linked to an acyl carrier protein (ACP). The protein is Enoyl-[acyl-carrier-protein] reductase [NADH] of Coxiella burnetii (strain CbuK_Q154) (Coxiella burnetii (strain Q154)).